The sequence spans 201 residues: ATP-dependent Clp protease proteolytic subunit 2 (201 aa).

The active-site Nucleophile is Ser100. Residue His125 is part of the active site.

Belongs to the peptidase S14 family. Fourteen ClpP subunits assemble into 2 heptameric rings which stack back to back to give a disk-like structure with a central cavity, resembling the structure of eukaryotic proteasomes.

Its subcellular location is the cytoplasm. It carries out the reaction Hydrolysis of proteins to small peptides in the presence of ATP and magnesium. alpha-casein is the usual test substrate. In the absence of ATP, only oligopeptides shorter than five residues are hydrolyzed (such as succinyl-Leu-Tyr-|-NHMec, and Leu-Tyr-Leu-|-Tyr-Trp, in which cleavage of the -Tyr-|-Leu- and -Tyr-|-Trp bonds also occurs).. Cleaves peptides in various proteins in a process that requires ATP hydrolysis. Has a chymotrypsin-like activity. Plays a major role in the degradation of misfolded proteins. This chain is ATP-dependent Clp protease proteolytic subunit 2, found in Corynebacterium glutamicum (strain ATCC 13032 / DSM 20300 / JCM 1318 / BCRC 11384 / CCUG 27702 / LMG 3730 / NBRC 12168 / NCIMB 10025 / NRRL B-2784 / 534).